The primary structure comprises 78 residues: ATP synthase subunit a (78 aa).

A run of 3 helical transmembrane segments spans residues 13-33 (LFGN…LGTS), 35-55 (FLGA…GMFI), and 57-77 (SLQA…KVEA).

The protein belongs to the ATPase A chain family. As to quaternary structure, F-type ATPases have 2 components, CF(1) - the catalytic core - and CF(0) - the membrane proton channel. CF(1) has five subunits: alpha(3), beta(3), gamma(1), delta(1), epsilon(1). CF(0) has three main subunits: a(1), b(2) and c(9-12). The alpha and beta chains form an alternating ring which encloses part of the gamma chain. CF(1) is attached to CF(0) by a central stalk formed by the gamma and epsilon chains, while a peripheral stalk is formed by the delta and b chains.

It is found in the cell membrane. Its function is as follows. Key component of the proton channel; it plays a direct role in the translocation of protons across the membrane. This chain is ATP synthase subunit a (atpB), found in Alkalihalobacillus alcalophilus (Bacillus alcalophilus).